Here is a 412-residue protein sequence, read N- to C-terminus: Protein MITOFERRINLIKE 1, chloroplastic (412 aa).

Residues Met-1–Lys-92 constitute a chloroplast transit peptide. A disordered region spans residues Val-43–Pro-83. 3 Solcar repeats span residues Glu-112 to Leu-198, Pro-206 to Ala-288, and Leu-298 to Thr-392. 6 consecutive transmembrane segments (helical) span residues Ile-115 to Leu-135, Ile-167 to Val-187, Val-208 to Pro-228, Ala-262 to Phe-282, Ser-303 to Val-323, and Thr-365 to Ala-385.

The protein belongs to the mitochondrial carrier (TC 2.A.29) family. Expressed in leaves, developing flowers and siliques.

It is found in the plastid. The protein resides in the chloroplast inner membrane. In terms of biological role, probably involved in iron transport into chloroplasts. In Arabidopsis thaliana (Mouse-ear cress), this protein is Protein MITOFERRINLIKE 1, chloroplastic (MFL1).